Here is a 160-residue protein sequence, read N- to C-terminus: Lipoprotein signal peptidase (160 aa).

Helical transmembrane passes span 59-79 and 84-104; these read PEGILLLALAISAGLTWYVWI and SPLFILTFALILGGGLGNLID. Active-site residues include Asp113 and Asp139. The chain crosses the membrane as a helical span at residues 132–152; the sequence is WPIFNIADACITIGACLLFFF.

The protein belongs to the peptidase A8 family.

The protein resides in the cell inner membrane. The catalysed reaction is Release of signal peptides from bacterial membrane prolipoproteins. Hydrolyzes -Xaa-Yaa-Zaa-|-(S,diacylglyceryl)Cys-, in which Xaa is hydrophobic (preferably Leu), and Yaa (Ala or Ser) and Zaa (Gly or Ala) have small, neutral side chains.. The protein operates within protein modification; lipoprotein biosynthesis (signal peptide cleavage). Its function is as follows. This protein specifically catalyzes the removal of signal peptides from prolipoproteins. This is Lipoprotein signal peptidase from Chlorobaculum parvum (strain DSM 263 / NCIMB 8327) (Chlorobium vibrioforme subsp. thiosulfatophilum).